Reading from the N-terminus, the 186-residue chain is Ribosome-recycling factor (186 aa).

It belongs to the RRF family.

The protein resides in the cytoplasm. Its function is as follows. Responsible for the release of ribosomes from messenger RNA at the termination of protein biosynthesis. May increase the efficiency of translation by recycling ribosomes from one round of translation to another. This Nitratiruptor sp. (strain SB155-2) protein is Ribosome-recycling factor.